Here is a 425-residue protein sequence, read N- to C-terminus: L-cysteine:1D-myo-inositol 2-amino-2-deoxy-alpha-D-glucopyranoside ligase (425 aa).

Zn(2+) is bound at residue Cys43. Residues 43 to 46, Ser58, and 81 to 83 contribute to the L-cysteinyl-5'-AMP site; these read CGIT and NVT. A 'HIGH' region motif is present at residues 45–55; sequence ITPYDATHMGH. Positions 199 to 204 match the 'ERGGDP' region motif; that stretch reads ERGGDP. Trp240 is an L-cysteinyl-5'-AMP binding site. A Zn(2+)-binding site is contributed by Cys244. 262 to 264 is an L-cysteinyl-5'-AMP binding site; it reads GSD. Residue His269 participates in Zn(2+) binding. Val295 lines the L-cysteinyl-5'-AMP pocket. Residues 301–305 carry the 'KMSKS' region motif; the sequence is KMSKS.

The protein belongs to the class-I aminoacyl-tRNA synthetase family. MshC subfamily. As to quaternary structure, monomer. Requires Zn(2+) as cofactor.

The catalysed reaction is 1D-myo-inositol 2-amino-2-deoxy-alpha-D-glucopyranoside + L-cysteine + ATP = 1D-myo-inositol 2-(L-cysteinylamino)-2-deoxy-alpha-D-glucopyranoside + AMP + diphosphate + H(+). Catalyzes the ATP-dependent condensation of GlcN-Ins and L-cysteine to form L-Cys-GlcN-Ins. In Paenarthrobacter aurescens (strain TC1), this protein is L-cysteine:1D-myo-inositol 2-amino-2-deoxy-alpha-D-glucopyranoside ligase.